We begin with the raw amino-acid sequence, 313 residues long: tRNA dimethylallyltransferase (313 aa).

An ATP-binding site is contributed by 10–17 (GPTAVGKT). Residue 12–17 (TAVGKT) coordinates substrate. Positions 35 to 38 (DSMQ) are interaction with substrate tRNA.

Belongs to the IPP transferase family. In terms of assembly, monomer. Mg(2+) is required as a cofactor.

The catalysed reaction is adenosine(37) in tRNA + dimethylallyl diphosphate = N(6)-dimethylallyladenosine(37) in tRNA + diphosphate. In terms of biological role, catalyzes the transfer of a dimethylallyl group onto the adenine at position 37 in tRNAs that read codons beginning with uridine, leading to the formation of N6-(dimethylallyl)adenosine (i(6)A). This is tRNA dimethylallyltransferase from Alkaliphilus oremlandii (strain OhILAs) (Clostridium oremlandii (strain OhILAs)).